The sequence spans 271 residues: Type III pantothenate kinase (271 aa).

6 to 13 lines the ATP pocket; it reads DVRNTHTV. 109–112 is a binding site for substrate; it reads GADR. The Proton acceptor role is filled by aspartate 111. Aspartate 131 is a binding site for K(+). Serine 134 is an ATP binding site. Threonine 186 is a substrate binding site.

The protein belongs to the type III pantothenate kinase family. As to quaternary structure, homodimer. NH4(+) serves as cofactor. K(+) is required as a cofactor.

Its subcellular location is the cytoplasm. The catalysed reaction is (R)-pantothenate + ATP = (R)-4'-phosphopantothenate + ADP + H(+). The protein operates within cofactor biosynthesis; coenzyme A biosynthesis; CoA from (R)-pantothenate: step 1/5. Functionally, catalyzes the phosphorylation of pantothenate (Pan), the first step in CoA biosynthesis. This is Type III pantothenate kinase from Mycobacteroides abscessus (strain ATCC 19977 / DSM 44196 / CCUG 20993 / CIP 104536 / JCM 13569 / NCTC 13031 / TMC 1543 / L948) (Mycobacterium abscessus).